The primary structure comprises 449 residues: Asparagine--tRNA ligase (449 aa).

This sequence belongs to the class-II aminoacyl-tRNA synthetase family. As to quaternary structure, homodimer.

It localises to the cytoplasm. The catalysed reaction is tRNA(Asn) + L-asparagine + ATP = L-asparaginyl-tRNA(Asn) + AMP + diphosphate + H(+). This is Asparagine--tRNA ligase from Mesomycoplasma hyopneumoniae (strain 7448) (Mycoplasma hyopneumoniae).